Consider the following 119-residue polypeptide: MAIITVTAQANEKNTRTVSTAKGDKKIISVPLFEKEKGSNVKVAYGSAFLPDFIQLGDTVTVSGRVQAKESGEYVNYNFVFPTVEKVFITNDNSSQSQAKQDLFGGSEPIEVNSEDLPF.

The interval 96 to 119 (QSQAKQDLFGGSEPIEVNSEDLPF) is disordered.

This sequence belongs to the skunalikevirus SSB protein family. Homodimer; two homodimers can further weakly assemble into a homotetramer.

Functionally, binds ssDNA with nanomolar affinity but no sequence specificity. This Lactococcus phage p2 (Lactococcus lactis bacteriophage p2) protein is SSB protein.